Here is a 445-residue protein sequence, read N- to C-terminus: Methylenetetrahydrofolate--tRNA-(uracil-5-)-methyltransferase TrmFO (445 aa).

9 to 14 is a binding site for FAD; that stretch reads GGGLAG.

It belongs to the MnmG family. TrmFO subfamily. Requires FAD as cofactor.

Its subcellular location is the cytoplasm. It catalyses the reaction uridine(54) in tRNA + (6R)-5,10-methylene-5,6,7,8-tetrahydrofolate + NADH + H(+) = 5-methyluridine(54) in tRNA + (6S)-5,6,7,8-tetrahydrofolate + NAD(+). The enzyme catalyses uridine(54) in tRNA + (6R)-5,10-methylene-5,6,7,8-tetrahydrofolate + NADPH + H(+) = 5-methyluridine(54) in tRNA + (6S)-5,6,7,8-tetrahydrofolate + NADP(+). In terms of biological role, catalyzes the folate-dependent formation of 5-methyl-uridine at position 54 (M-5-U54) in all tRNAs. This Rhizorhabdus wittichii (strain DSM 6014 / CCUG 31198 / JCM 15750 / NBRC 105917 / EY 4224 / RW1) (Sphingomonas wittichii) protein is Methylenetetrahydrofolate--tRNA-(uracil-5-)-methyltransferase TrmFO.